Reading from the N-terminus, the 24-residue chain is Citropin-3.1.2 (24 aa).

Expressed by the dorsal and submental skin glands.

It localises to the secreted. In Ranoidea citropa (Australian Blue Mountains tree frog), this protein is Citropin-3.1.2.